Here is a 287-residue protein sequence, read N- to C-terminus: Glutamate racemase (287 aa).

Substrate contacts are provided by residues 32-33 (DS) and 64-65 (YG). The active-site Proton donor/acceptor is Cys96. 97-98 (NT) contributes to the substrate binding site. Cys208 serves as the catalytic Proton donor/acceptor. Residue 209 to 210 (TH) participates in substrate binding.

Belongs to the aspartate/glutamate racemases family.

The enzyme catalyses L-glutamate = D-glutamate. Its pathway is cell wall biogenesis; peptidoglycan biosynthesis. Provides the (R)-glutamate required for cell wall biosynthesis. This is Glutamate racemase from Yersinia enterocolitica serotype O:8 / biotype 1B (strain NCTC 13174 / 8081).